A 160-amino-acid chain; its full sequence is Cytochrome b6-f complex subunit 4 (160 aa).

3 consecutive transmembrane segments (helical) span residues 36–56, 95–115, and 131–151; these read LLYV…ALAV, LLGV…PFIE, and TVFL…ALPL.

Belongs to the cytochrome b family. PetD subfamily. The 4 large subunits of the cytochrome b6-f complex are cytochrome b6, subunit IV (17 kDa polypeptide, PetD), cytochrome f and the Rieske protein, while the 4 small subunits are PetG, PetL, PetM and PetN. The complex functions as a dimer.

Its subcellular location is the cellular thylakoid membrane. Functionally, component of the cytochrome b6-f complex, which mediates electron transfer between photosystem II (PSII) and photosystem I (PSI), cyclic electron flow around PSI, and state transitions. In Nostoc punctiforme (strain ATCC 29133 / PCC 73102), this protein is Cytochrome b6-f complex subunit 4.